A 1183-amino-acid polypeptide reads, in one-letter code: Chromosome partition protein Smc (1183 aa).

32–39 lines the ATP pocket; it reads PNGSGKSN. Positions 162-483 form a coiled coil; that stretch reads EEAAGIKKLQ…KLSQDIREFE (322 aa). Positions 519-632 constitute an SMC hinge domain; the sequence is SGIDGVLISL…VENIDIATDI (114 aa). Residues 666-1019 adopt a coiled-coil conformation; the sequence is INQIFERKKE…VMDLIQEIDE (354 aa).

Belongs to the SMC family. Homodimer.

It is found in the cytoplasm. Required for chromosome condensation and partitioning. This chain is Chromosome partition protein Smc, found in Fusobacterium nucleatum subsp. nucleatum (strain ATCC 25586 / DSM 15643 / BCRC 10681 / CIP 101130 / JCM 8532 / KCTC 2640 / LMG 13131 / VPI 4355).